The following is a 170-amino-acid chain: NADH-quinone oxidoreductase subunit B (170 aa).

Residues Cys37, Cys38, Cys102, and Cys131 each coordinate [4Fe-4S] cluster.

This sequence belongs to the complex I 20 kDa subunit family. In terms of assembly, NDH-1 is composed of 14 different subunits. Subunits NuoB, C, D, E, F, and G constitute the peripheral sector of the complex. [4Fe-4S] cluster is required as a cofactor.

It is found in the cell inner membrane. The enzyme catalyses a quinone + NADH + 5 H(+)(in) = a quinol + NAD(+) + 4 H(+)(out). In terms of biological role, NDH-1 shuttles electrons from NADH, via FMN and iron-sulfur (Fe-S) centers, to quinones in the respiratory chain. The immediate electron acceptor for the enzyme in this species is believed to be ubiquinone. Couples the redox reaction to proton translocation (for every two electrons transferred, four hydrogen ions are translocated across the cytoplasmic membrane), and thus conserves the redox energy in a proton gradient. The sequence is that of NADH-quinone oxidoreductase subunit B from Geobacter sp. (strain M21).